A 281-amino-acid polypeptide reads, in one-letter code: Merozoite surface protein 2 (281 aa).

Positions 1–20 (MKVIKTLSIINFFIFVTFNI) are cleaved as a signal peptide. Asparagine 22 and asparagine 36 each carry an N-linked (GlcNAc...) asparagine glycan. The interval 42-242 (SMEESNPPTG…DSQKECTDGN (201 aa)) is disordered. Positions 44–207 (EESNPPTGAS…EQTESPELQS (164 aa)) are polymorphic region. Tandem repeats lie at residues 51-58 (GASGRAGA), 59-66 (GASGRAGA), and 67-74 (GASGRAGA). A 3 X 8 AA tandem repeats of G-A-S-G-R-A-G-A region spans residues 51–74 (GASGRAGAGASGRAGAGASGRAGA). Over residues 54 to 76 (GRAGAGASGRAGAGASGRAGAGA) the composition is skewed to gly residues. Residues 77-133 (GAVASAGSGDGAVASAGNGANPGADAKRSTSTPATTTTTTTTNDAEASTSTSSENPN) are compositionally biased toward low complexity. Composition is skewed to polar residues over residues 150–174 (NKAN…NVPP) and 181–209 (KSPT…QSAP). Asparagine 158 is a glycosylation site (N-linked (GlcNAc...) asparagine). An N-linked (GlcNAc...) asparagine glycan is attached at asparagine 230. Cysteines 238 and 246 form a disulfide. Asparagine 254 and asparagine 255 each carry an N-linked (GlcNAc...) asparagine glycan. Residue asparagine 255 is the site of GPI-anchor amidated asparagine attachment. Residues 256-281 (SSNIASINKFVVLISATLVLSFAIFI) constitute a propeptide, removed in mature form.

It localises to the cell membrane. Functionally, may play a role in the merozoite attachment to the erythrocyte. The polypeptide is Merozoite surface protein 2 (Plasmodium falciparum (isolate thtn / Thailand)).